The primary structure comprises 394 residues: Elongation factor Tu (394 aa).

The 195-residue stretch at 10 to 204 (KPHINVGTIG…AMDNYIPIPE (195 aa)) folds into the tr-type G domain. The interval 19-26 (GHVDHGKT) is G1. 19-26 (GHVDHGKT) is a binding site for GTP. A Mg(2+)-binding site is contributed by threonine 26. The interval 60–64 (GITIN) is G2. The segment at 81–84 (DCPG) is G3. GTP-binding positions include 81 to 85 (DCPGH) and 136 to 139 (NKVD). A G4 region spans residues 136-139 (NKVD). The G5 stretch occupies residues 174–176 (SAL).

This sequence belongs to the TRAFAC class translation factor GTPase superfamily. Classic translation factor GTPase family. EF-Tu/EF-1A subfamily. In terms of assembly, monomer.

Its subcellular location is the cytoplasm. The enzyme catalyses GTP + H2O = GDP + phosphate + H(+). Its function is as follows. GTP hydrolase that promotes the GTP-dependent binding of aminoacyl-tRNA to the A-site of ribosomes during protein biosynthesis. The polypeptide is Elongation factor Tu (Methylacidiphilum infernorum (isolate V4) (Methylokorus infernorum (strain V4))).